Reading from the N-terminus, the 354-residue chain is Heme A synthase (354 aa).

8 helical membrane passes run 21 to 41 (VAVWLLACCFMVAVMVLLGGL), 106 to 126 (VWGRLIGVVFGLPFLWLALSG), 139 to 159 (VFLLGAAQGGMGWFMVKSGLV), 171 to 191 (AHLALAFLIHGWMFWLALDIL), 212 to 232 (MLGLTGLVIVTLLFGGLVAGL), 268 to 288 (VQFGHRTLAEITIVVALVGWF), 304 to 324 (AVGLMALLQVGLGIGTLVMVV), and 326 to 346 (VWLASAHQMGAMALLTLCLWA). A heme-binding site is contributed by His-272. Residue His-332 participates in heme binding.

It belongs to the COX15/CtaA family. Type 2 subfamily. In terms of assembly, interacts with CtaB. It depends on heme b as a cofactor.

The protein resides in the cell membrane. It carries out the reaction Fe(II)-heme o + 2 A + H2O = Fe(II)-heme a + 2 AH2. Its pathway is porphyrin-containing compound metabolism; heme A biosynthesis; heme A from heme O: step 1/1. In terms of biological role, catalyzes the conversion of heme O to heme A by two successive hydroxylations of the methyl group at C8. The first hydroxylation forms heme I, the second hydroxylation results in an unstable dihydroxymethyl group, which spontaneously dehydrates, resulting in the formyl group of heme A. This Paramagnetospirillum magneticum (strain ATCC 700264 / AMB-1) (Magnetospirillum magneticum) protein is Heme A synthase.